The chain runs to 982 residues: E3 ubiquitin-protein ligase CBL-B (982 aa).

The interval 35 to 167 (PPKQAAADRR…KAIFPNGQFQ (133 aa)) is 4H. One can recognise a Cbl-PTB domain in the interval 35–343 (PPKQAAADRR…GRSYNPDLTG (309 aa)). Positions 168–240 (GDNFRITKAD…FEFDIFTRLF (73 aa)) are EF-hand-like. Positions 221, 223, 225, 227, and 232 each coordinate Ca(2+). Residues 241–343 (QPWGSILRNW…GRSYNPDLTG (103 aa)) form an SH2-like region. S282 carries the phosphoserine; by PKC/PRKCQ modification. 4-O-phospho-L-tyrosine is bound at residue R286. Residues 344-372 (LCEPTPHDHIKVTQEQYELYCEMGSTFQL) are linker. Phosphotyrosine is present on Y363. Residues 373–412 (CKICAENDKDVKIEPCGHLMCTSCLTAWQESDGQGCPFCR) form an RING-type zinc finger. The disordered stretch occupies residues 465–588 (ASVRKCTDRQ…SVPSRDQPMP (124 aa)). Polar residues predominate over residues 473–486 (RQNSPVTSPGSSPL). Phosphoserine occurs at positions 476, 480, 484, 521, 525, and 529. The tract at residues 543–567 (PLPAPPPPLRDPPPPPERPPPIPPD) is interaction with VAV1. Residues 544 to 566 (LPAPPPPLRDPPPPPERPPPIPP) are compositionally biased toward pro residues. S633 carries the post-translational modification Phosphoserine. 2 positions are modified to phosphotyrosine: Y664 and Y708. 2 disordered regions span residues 702-723 (EDDDDEYKIPSSHPVSLNSQPS) and 745-929 (THGA…EAAL). Residues 714–723 (HPVSLNSQPS) show a composition bias toward polar residues. The segment covering 819-828 (PSLPPPPPPA) has biased composition (pro residues). Low complexity predominate over residues 838 to 848 (PPGSSSRPSSG). A compositionally biased stretch (polar residues) spans 884–899 (RASQDYDQLPSSSDGS). Y889 bears the Phosphotyrosine mark. Positions 891-927 (QLPSSSDGSQAPARPPKPRPRRTAPEIHHRKPHGPEA) are interaction with SH3KBP1. Basic residues predominate over residues 906–922 (PKPRPRRTAPEIHHRKP). In terms of domain architecture, UBA spans 931 to 970 (NVDAKIAKLMGEGYAFEEVKRALEIAQNNVEVARSILREF).

As to quaternary structure, interacts with SH3 domain-containing proteins LCK, CRK and SORBS1. Interacts with LCP2 and ZAP70. Interacts with CBL. Interacts with SH3 domain-containing proteins VAV1, FYN, FGR, PLCG1, GRB2, CRKL, PIK3R1 and SH3KBP1/CIN85. Identified in heterotrimeric complexes with SH3KBP1/CIN85, CD2AP and ARHGEF7, where one CBLB peptide binds two copies of the other protein. Interacts with poly-ubiquitinated proteins. Dimerization is required for the binding of poly-ubiquitin, but not for the binding of mono-ubiquitin. Interacts with EGFR (phosphorylated). Interacts with IFT20. In terms of processing, phosphorylated on tyrosine and serine residues upon TCR or BCR activation. Phosphorylated on Tyr-664 and Tyr-708 in adipocytes following insulin stimulation. Post-translationally, auto-ubiquitinated upon EGF-mediated cell activation or upon T-cell costimulation by CD28; which promotes proteasomal degradation.

It is found in the cytoplasm. It carries out the reaction S-ubiquitinyl-[E2 ubiquitin-conjugating enzyme]-L-cysteine + [acceptor protein]-L-lysine = [E2 ubiquitin-conjugating enzyme]-L-cysteine + N(6)-ubiquitinyl-[acceptor protein]-L-lysine.. The protein operates within protein modification; protein ubiquitination. E3 ubiquitin-protein ligase which accepts ubiquitin from specific E2 ubiquitin-conjugating enzymes, and transfers it to substrates, generally promoting their degradation by the proteasome. Negatively regulates TCR (T-cell receptor), BCR (B-cell receptor) and FCER1 (high affinity immunoglobulin epsilon receptor) signal transduction pathways. In naive T-cells, inhibits VAV1 activation upon TCR engagement and imposes a requirement for CD28 costimulation for proliferation and IL-2 production. Also acts by promoting PIK3R1/p85 ubiquitination, which impairs its recruitment to the TCR and subsequent activation. In activated T-cells, inhibits PLCG1 activation and calcium mobilization upon restimulation and promotes anergy. In B-cells, acts by ubiquitinating SYK and promoting its proteasomal degradation. Slightly promotes SRC ubiquitination. May be involved in EGFR ubiquitination and internalization. May be functionally coupled with the E2 ubiquitin-protein ligase UB2D3. In association with CBL, required for proper feedback inhibition of ciliary platelet-derived growth factor receptor-alpha (PDGFRA) signaling pathway via ubiquitination and internalization of PDGFRA. The sequence is that of E3 ubiquitin-protein ligase CBL-B (Cblb) from Mus musculus (Mouse).